Consider the following 358-residue polypeptide: Phospho-N-acetylmuramoyl-pentapeptide-transferase (358 aa).

A run of 10 helical transmembrane segments spans residues 28–48 (WALATALLVSIVVGPRFIAWL), 72–92 (TMGGLLIGFAVTFSVLLWADL), 96–116 (YIWLTLLVFTGFGFIGFLDDY), 133–153 (FLWQVGVAVAAMYLLVQLPAY), 164–184 (GLTPDLGWLYIPFAVAVMVGS), 196–216 (GLAIGPTIVAGIVFSIFIYVA), 233–253 (VGEVAVFCGALVGAGLGFLWF), 260–280 (VFMGDVGSLSLGGTLGFLAVL), 285–305 (LLLLVVGGLFVVETLSVILQV), and 335–355 (KIIIRFWITSALLGLIALSVL).

This sequence belongs to the glycosyltransferase 4 family. MraY subfamily. It depends on Mg(2+) as a cofactor.

Its subcellular location is the cell inner membrane. The enzyme catalyses UDP-N-acetyl-alpha-D-muramoyl-L-alanyl-gamma-D-glutamyl-meso-2,6-diaminopimeloyl-D-alanyl-D-alanine + di-trans,octa-cis-undecaprenyl phosphate = di-trans,octa-cis-undecaprenyl diphospho-N-acetyl-alpha-D-muramoyl-L-alanyl-D-glutamyl-meso-2,6-diaminopimeloyl-D-alanyl-D-alanine + UMP. Its pathway is cell wall biogenesis; peptidoglycan biosynthesis. Catalyzes the initial step of the lipid cycle reactions in the biosynthesis of the cell wall peptidoglycan: transfers peptidoglycan precursor phospho-MurNAc-pentapeptide from UDP-MurNAc-pentapeptide onto the lipid carrier undecaprenyl phosphate, yielding undecaprenyl-pyrophosphoryl-MurNAc-pentapeptide, known as lipid I. In Nitratidesulfovibrio vulgaris (strain ATCC 29579 / DSM 644 / CCUG 34227 / NCIMB 8303 / VKM B-1760 / Hildenborough) (Desulfovibrio vulgaris), this protein is Phospho-N-acetylmuramoyl-pentapeptide-transferase.